The sequence spans 230 residues: Phosphoglycerate mutase-like protein 4 (230 aa).

His21 acts as the Tele-phosphohistidine intermediate in catalysis. Glu96 functions as the Proton donor/acceptor in the catalytic mechanism.

Belongs to the phosphoglycerate mutase family.

Functionally, may play a role in carbohydrates metabolism. The chain is Phosphoglycerate mutase-like protein 4 from Arabidopsis thaliana (Mouse-ear cress).